Here is a 517-residue protein sequence, read N- to C-terminus: T-box transcription factor TBX5 (517 aa).

The segment at 1-46 (MADADEGFGLARTPLEPDSKDRSCDSKPESALGAPSKSPSSPQAAF) is disordered. A compositionally biased stretch (basic and acidic residues) spans 15 to 28 (LEPDSKDRSCDSKP). The span at 34-45 (APSKSPSSPQAA) shows a compositional bias: low complexity. Residues 58–238 (LHERELWLKF…NNPFAKGFRG (181 aa)) constitute a DNA-binding region (T-box). 2 disordered regions span residues 270–313 (HSPF…YPLA) and 331–369 (SSTE…SYRT). Positions 271–300 (SPFSSETRALSTSSNLGSQYQCENGVSGPS) are enriched in polar residues. Lysine 338 is modified (N6-acetyllysine). The segment covering 357-369 (YPQQQGLSTSYRT) has biased composition (polar residues).

Monomer. Homodimer (via the T-box); binds DNA as homodimer. Interacts (via the T-box) with NKX2-5 (via the homeobox); this complex binds DNA. Interacts with GATA4. Interacts with KAT2A and KAT2B. Post-translationally, acetylation at Lys-338 by KAT2A and KAT2B promotes nuclear retention.

It localises to the nucleus. It is found in the cytoplasm. Its function is as follows. DNA-binding protein that regulates the transcription of several genes and is involved in heart development and limb pattern formation. Binds to the core DNA motif of NPPA promoter. The sequence is that of T-box transcription factor TBX5 (Tbx5) from Rattus norvegicus (Rat).